We begin with the raw amino-acid sequence, 157 residues long: MTSNQVIIDLQLACKNLHGLPNRKMFQSWVSAIFSIYKKKIELTVRIVDIKEMHYLNWYYLKKDCPTNVLSFPFTPPLGMKSPLLGDVVLCRQIIEYESKEKNVPGRSHWAHMIIHGSLHLLGYNHIVDKEAILMQRVERNILQKCGYRTCCHVAHR.

His-116, His-120, and His-126 together coordinate Zn(2+).

This sequence belongs to the endoribonuclease YbeY family. Zn(2+) serves as cofactor.

Its subcellular location is the cytoplasm. In terms of biological role, single strand-specific metallo-endoribonuclease involved in late-stage 70S ribosome quality control and in maturation of the 3' terminus of the 16S rRNA. The protein is Endoribonuclease YbeY of Blochmanniella pennsylvanica (strain BPEN).